The sequence spans 391 residues: Putative alpha-ketoglutarate-dependent sulfonate dioxygenase (391 aa).

The Fe cation site is built by H204 and D206. T231 and W338 together coordinate 2-oxoglutarate. Position 353 (H353) interacts with Fe cation. Positions 364 and 368 each coordinate 2-oxoglutarate.

The protein belongs to the TfdA dioxygenase family. It depends on Fe(2+) as a cofactor.

Its pathway is organosulfur degradation; alkanesulfonate degradation. In terms of biological role, acts as an alpha-ketoglutarate-dependent dioxygenase active on sulfonates. The chain is Putative alpha-ketoglutarate-dependent sulfonate dioxygenase from Schizosaccharomyces pombe (strain 972 / ATCC 24843) (Fission yeast).